The primary structure comprises 586 residues: Proline--tRNA ligase (586 aa).

The protein belongs to the class-II aminoacyl-tRNA synthetase family. ProS type 1 subfamily. As to quaternary structure, homodimer.

The protein localises to the cytoplasm. It catalyses the reaction tRNA(Pro) + L-proline + ATP = L-prolyl-tRNA(Pro) + AMP + diphosphate. In terms of biological role, catalyzes the attachment of proline to tRNA(Pro) in a two-step reaction: proline is first activated by ATP to form Pro-AMP and then transferred to the acceptor end of tRNA(Pro). As ProRS can inadvertently accommodate and process non-cognate amino acids such as alanine and cysteine, to avoid such errors it has two additional distinct editing activities against alanine. One activity is designated as 'pretransfer' editing and involves the tRNA(Pro)-independent hydrolysis of activated Ala-AMP. The other activity is designated 'posttransfer' editing and involves deacylation of mischarged Ala-tRNA(Pro). The misacylated Cys-tRNA(Pro) is not edited by ProRS. The sequence is that of Proline--tRNA ligase from Kineococcus radiotolerans (strain ATCC BAA-149 / DSM 14245 / SRS30216).